We begin with the raw amino-acid sequence, 966 residues long: uncharacterized protein (966 aa).

Residues 1-24 (MQGNLLKVLGVLAIVATLVCFIFA) form the signal peptide. 6 helical membrane-spanning segments follow: residues 601–621 (IKAILILYVMTYGAMFLLGFA), 711–731 (LGLSGIIYFIITFIAVCIVII), 743–763 (AFMATCILIGIAPLFISFLLF), 785–805 (VVMMAGIIVLTQLFTIYLDFV), 822–842 (FIGTILPIALLNVPIFCINWF), and 855–875 (GVNMQNIVALVIIAYGMYGYV). Residues 918–966 (TRQGITGRAEARLKQRNKTLDQAEKNRKNTQKEGGEKTNEEPPKPETPK) form a disordered region. The span at 926 to 966 (AEARLKQRNKTLDQAEKNRKNTQKEGGEKTNEEPPKPETPK) shows a compositional bias: basic and acidic residues.

The protein belongs to the TrbL/VirB6 family.

Its subcellular location is the cell membrane. This is an uncharacterized protein from Rickettsia conorii (strain ATCC VR-613 / Malish 7).